The following is a 216-amino-acid chain: Cytidylate kinase (216 aa).

10–18 provides a ligand contact to ATP; sequence GPAAAGKST.

It belongs to the cytidylate kinase family. Type 1 subfamily.

The protein localises to the cytoplasm. The catalysed reaction is CMP + ATP = CDP + ADP. It catalyses the reaction dCMP + ATP = dCDP + ADP. This chain is Cytidylate kinase, found in Macrococcus caseolyticus (strain JCSC5402) (Macrococcoides caseolyticum).